A 514-amino-acid chain; its full sequence is MTLLPGDNSDYDYSALSCASDTSFHPAFFPQRQAIKGVFYRRAQRLGPQDDLHQSISLGDRRRQIIINVGGIKYSLPWTTLDEFPLTRLGQLKACTNFDDILSVCDDYDVTCNEFFFDRNPGAFGTILTFLRAGKLRLLREMCALSFQEELLYWGIAEDHLDGCCKRRYLQKIEEFAEMMEREDEEEALDSEDQESEGPSTSEGRLSRCMRRLRDMVEKPHSGLPGKVFACLSVLFVTVTAVNLSVSTLPSLREEEEQGQCSQMCHNVFIVESVCVGWFSLEFLLRFIQAPSKFAFLRSPLTLIDLVAILPYYVTLLVDGAASSRRKPSTGNSYLDKVGLVLRVLRALRILYVMRLARHSLGLQTLGLTARRCTREFGLLLLFLCVAIALFAPLLYVIENEMADSPEFTSIPACYWWAVITMTTVGYGDMVPRSTPGQVVALSSILSGILLMAFPVTSIFHTFSRSYLELKQEQERVLIRRAQYLIKTKSQLSGMSQDSDILFGSASSDTRDNN.

The Cytoplasmic portion of the chain corresponds to 1 to 224; sequence MTLLPGDNSD…DMVEKPHSGL (224 aa). Residues 181-196 are compositionally biased toward acidic residues; sequence EREDEEEALDSEDQES. The interval 181–205 is disordered; that stretch reads EREDEEEALDSEDQESEGPSTSEGR. The helical transmembrane segment at 225–246 threads the bilayer; the sequence is PGKVFACLSVLFVTVTAVNLSV. Residues 247 to 267 are Extracellular-facing; it reads STLPSLREEEEQGQCSQMCHN. A helical transmembrane segment spans residues 268 to 289; that stretch reads VFIVESVCVGWFSLEFLLRFIQ. At 290 to 300 the chain is on the cytoplasmic side; it reads APSKFAFLRSP. A helical transmembrane segment spans residues 301–321; that stretch reads LTLIDLVAILPYYVTLLVDGA. Residues 322–338 lie on the Extracellular side of the membrane; that stretch reads ASSRRKPSTGNSYLDKV. Residues 339–359 traverse the membrane as a helical; Voltage-sensor segment; the sequence is GLVLRVLRALRILYVMRLARH. Residues 360-374 lie on the Cytoplasmic side of the membrane; it reads SLGLQTLGLTARRCT. The chain crosses the membrane as a helical span at residues 375-396; the sequence is REFGLLLLFLCVAIALFAPLLY. Over 397–411 the chain is Extracellular; sequence VIENEMADSPEFTSI. Positions 412 to 423 form an intramembrane region, helical; the sequence is PACYWWAVITMT. Residues 424-429 carry the Selectivity filter motif; it reads TVGYGD. An intramembrane segment occupies 424–431; that stretch reads TVGYGDMV. The Extracellular segment spans residues 432-438; the sequence is PRSTPGQ. Residues 439–467 traverse the membrane as a helical segment; it reads VVALSSILSGILLMAFPVTSIFHTFSRSY. Residues 468-514 lie on the Cytoplasmic side of the membrane; sequence LELKQEQERVLIRRAQYLIKTKSQLSGMSQDSDILFGSASSDTRDNN.

This sequence belongs to the potassium channel family. G (TC 1.A.1.2) subfamily. Kv6.1/KCNG1 sub-subfamily. In terms of assembly, heterotetramer with KCNB1 or KCNB2.

The protein localises to the cell membrane. In terms of biological role, regulatory alpha-subunit of the voltage-gated potassium (Kv) channel which, when coassembled with KCNB1 or KCNB2, can modulate their expression and their gating kinetics by acting on deactivation upon repolarization and inactivation during maintained depolarization. Potassium channel subunit that does not form functional channels by itself. This chain is Voltage-gated potassium channel regulatory subunit KCNG1, found in Rattus norvegicus (Rat).